Reading from the N-terminus, the 466-residue chain is Cysteine--tRNA ligase (466 aa).

C28 lines the Zn(2+) pocket. The 'HIGH' region motif lies at 30–40; it reads PTVYNFFHIGN. 3 residues coordinate Zn(2+): C208, H233, and E237. The 'KMSKS' region signature appears at 265–269; sequence KMSKS. K268 lines the ATP pocket.

This sequence belongs to the class-I aminoacyl-tRNA synthetase family. Monomer. It depends on Zn(2+) as a cofactor.

The protein resides in the cytoplasm. It carries out the reaction tRNA(Cys) + L-cysteine + ATP = L-cysteinyl-tRNA(Cys) + AMP + diphosphate. The protein is Cysteine--tRNA ligase of Clostridium perfringens (strain SM101 / Type A).